The sequence spans 490 residues: Protein twist (490 aa).

3 disordered regions span residues 48–74, 98–167, and 330–359; these read QLQH…QHTQ, PSNE…TGGS, and LDGS…ETDE. The segment covering 54-64 has biased composition (basic residues); sequence QHLHSHQHHQQ. Low complexity-rich tracts occupy residues 65–74 and 104–135; these read HQQQQQQHTQ and STSS…NNPS. Basic residues predominate over residues 339–351; that stretch reads AFRKPRRRLKRKP. The bHLH domain maps to 362–413; it reads NQRVMANVRERQRTQSLNDAFKSLQQIIPTLPSDKLSKIQTLKLATRYIDFL.

Efficient DNA binding requires dimerization with another bHLH protein. Homodimer.

It localises to the nucleus. Its function is as follows. Involved in the establishment and dorsoventral patterning of germ layers in the embryo. This Drosophila erecta (Fruit fly) protein is Protein twist.